Consider the following 97-residue polypeptide: Aspartyl/glutamyl-tRNA(Asn/Gln) amidotransferase subunit C (97 aa).

Belongs to the GatC family. In terms of assembly, heterotrimer of A, B and C subunits.

The catalysed reaction is L-glutamyl-tRNA(Gln) + L-glutamine + ATP + H2O = L-glutaminyl-tRNA(Gln) + L-glutamate + ADP + phosphate + H(+). The enzyme catalyses L-aspartyl-tRNA(Asn) + L-glutamine + ATP + H2O = L-asparaginyl-tRNA(Asn) + L-glutamate + ADP + phosphate + 2 H(+). Its function is as follows. Allows the formation of correctly charged Asn-tRNA(Asn) or Gln-tRNA(Gln) through the transamidation of misacylated Asp-tRNA(Asn) or Glu-tRNA(Gln) in organisms which lack either or both of asparaginyl-tRNA or glutaminyl-tRNA synthetases. The reaction takes place in the presence of glutamine and ATP through an activated phospho-Asp-tRNA(Asn) or phospho-Glu-tRNA(Gln). The chain is Aspartyl/glutamyl-tRNA(Asn/Gln) amidotransferase subunit C from Prochlorococcus marinus (strain MIT 9313).